The following is a 291-amino-acid chain: MSNERDTSRTPTPDHAEHNAFFPSPYSLSQYTSAKTDFDGADYPTPYKGGKKVLMIGTDERYILMQNGSMFSTGNHPVEMLLPMYHLDKAGFEFDVATLSGNPVKLEMWAMPGEDEAVKSIYAKYLPKLKAPQKLADLLEQAVADDSPYAAVFVPGGHGVLAGIPHSREVKRLLNAFLAKDRYIITLCHGPACLLAPAVEEKPEDYPFKDYEICVFPDALDTGANLEIGYMPGPLPWLVGENLQKLGVKILNKGITGQVHRDRKLLTGDSPLASNNLGKLAAKTLLEAFAR.

Over residues 1 to 18 the composition is skewed to basic and acidic residues; the sequence is MSNERDTSRTPTPDHAEH. The segment at 1 to 20 is disordered; that stretch reads MSNERDTSRTPTPDHAEHNA. Cysteine 188 serves as the catalytic Nucleophile.

The protein belongs to the peptidase C56 family. HchA subfamily.

Its subcellular location is the cytoplasm. The enzyme catalyses N(omega)-(1-hydroxy-2-oxopropyl)-L-arginyl-[protein] + H2O = lactate + L-arginyl-[protein] + H(+). It carries out the reaction N(6)-(1-hydroxy-2-oxopropyl)-L-lysyl-[protein] + H2O = lactate + L-lysyl-[protein] + H(+). It catalyses the reaction S-(1-hydroxy-2-oxopropyl)-L-cysteinyl-[protein] + H2O = lactate + L-cysteinyl-[protein] + H(+). The catalysed reaction is N(omega)-(1-hydroxy-2-oxoethyl)-L-arginyl-[protein] + H2O = L-arginyl-[protein] + glycolate + H(+). The enzyme catalyses N(6)-(1-hydroxy-2-oxoethyl)-L-lysyl-[protein] + H2O = glycolate + L-lysyl-[protein] + H(+). It carries out the reaction S-(1-hydroxy-2-oxoethyl)-L-cysteinyl-[protein] + H2O = glycolate + L-cysteinyl-[protein] + H(+). It catalyses the reaction N(2)-(1-hydroxy-2-oxopropyl)-dGTP + H2O = lactate + dGTP + H(+). The catalysed reaction is N(2)-(1-hydroxy-2-oxopropyl)-GTP + H2O = lactate + GTP + H(+). The enzyme catalyses N(2)-(1-hydroxy-2-oxopropyl)-GDP + H2O = lactate + GDP + H(+). It carries out the reaction N(2)-(1-hydroxy-2-oxopropyl)-GMP + H2O = lactate + GMP + H(+). It catalyses the reaction N(2)-(1-hydroxy-2-oxoethyl)-dGTP + H2O = dGTP + glycolate + H(+). The catalysed reaction is N(2)-(1-hydroxy-2-oxoethyl)-GTP + H2O = glycolate + GTP + H(+). The enzyme catalyses N(2)-(1-hydroxy-2-oxoethyl)-GDP + H2O = glycolate + GDP + H(+). It carries out the reaction N(2)-(1-hydroxy-2-oxoethyl)-GMP + H2O = glycolate + GMP + H(+). It catalyses the reaction an N(2)-(1-hydroxy-2-oxopropyl)-guanosine in RNA + H2O = a guanosine in RNA + lactate + H(+). The catalysed reaction is an N(2)-(1-hydroxy-2-oxopropyl)-2'-deoxyguanosine in DNA + H2O = a 2'-deoxyguanosine in DNA + lactate + H(+). The enzyme catalyses an N(2)-(1-hydroxy-2-oxoethyl)-guanosine in RNA + H2O = a guanosine in RNA + glycolate + H(+). It carries out the reaction an N(2)-(1-hydroxy-2-oxoethyl)-2'-deoxyguanosine in DNA + H2O = a 2'-deoxyguanosine in DNA + glycolate + H(+). Its function is as follows. Protein and nucleotide deglycase that catalyzes the deglycation of the Maillard adducts formed between amino groups of proteins or nucleotides and reactive carbonyl groups of glyoxals. Thus, functions as a protein deglycase that repairs methylglyoxal- and glyoxal-glycated proteins, and releases repaired proteins and lactate or glycolate, respectively. Deglycates cysteine, arginine and lysine residues in proteins, and thus reactivates these proteins by reversing glycation by glyoxals. Acts on early glycation intermediates (hemithioacetals and aminocarbinols), preventing the formation of Schiff bases and advanced glycation endproducts (AGE). Also functions as a nucleotide deglycase able to repair glycated guanine in the free nucleotide pool (GTP, GDP, GMP, dGTP) and in DNA and RNA. Is thus involved in a major nucleotide repair system named guanine glycation repair (GG repair), dedicated to reversing methylglyoxal and glyoxal damage via nucleotide sanitization and direct nucleic acid repair. Plays an important role in protecting cells from carbonyl stress. In Pseudomonas aeruginosa (strain LESB58), this protein is Protein/nucleic acid deglycase HchA.